A 147-amino-acid polypeptide reads, in one-letter code: Large ribosomal subunit protein bL9 (147 aa).

The interval Thr40 to Gln60 is disordered. The span at Lys45–Lys59 shows a compositional bias: basic and acidic residues.

The protein belongs to the bacterial ribosomal protein bL9 family.

Its function is as follows. Binds to the 23S rRNA. This Exiguobacterium sibiricum (strain DSM 17290 / CCUG 55495 / CIP 109462 / JCM 13490 / 255-15) protein is Large ribosomal subunit protein bL9.